Reading from the N-terminus, the 105-residue chain is Large ribosomal subunit protein bL21 (105 aa).

Belongs to the bacterial ribosomal protein bL21 family. Part of the 50S ribosomal subunit. Contacts protein L20.

In terms of biological role, this protein binds to 23S rRNA in the presence of protein L20. This is Large ribosomal subunit protein bL21 from Treponema pallidum (strain Nichols).